We begin with the raw amino-acid sequence, 161 residues long: V-type proton ATPase 16 kDa proteolipid subunit c (161 aa).

Topologically, residues 1-15 (MSYDLATAERAAYAP) are lumenal. Residues 16–36 (FFGYMGAASAQIFTVLGAAYG) form a helical membrane-spanning segment. The Cytoplasmic portion of the chain corresponds to 37–58 (TAKSAVGISSMGVMRPELIMKS). A helical membrane pass occupies residues 59 to 79 (VIPVIMAGIIGIYGLVVAMVL). Topologically, residues 80-98 (RGKVTSASAGYTLDKGFAH) are lumenal. Residues 99–119 (LAAGLTCGLCGLGAGYAIGIV) traverse the membrane as a helical segment. The Cytoplasmic portion of the chain corresponds to 120–137 (GDAGVRGTAQQPRLFVGM). The helical transmembrane segment at 138-158 (ILILIFSEVLGLYGMIVALIL) threads the bilayer. At 159–161 (GTS) the chain is on the lumenal side.

It belongs to the V-ATPase proteolipid subunit family. In terms of assembly, V-ATPase is a heteromultimeric enzyme made up of two complexes: the ATP-hydrolytic V1 complex and the proton translocation V0 complex. The V1 complex consists of three catalytic AB heterodimers that form a heterohexamer, three peripheral stalks each consisting of EG heterodimers, one central rotor including subunits D and F, and the regulatory subunits C and H. The proton translocation complex V0 consists of the proton transport subunit a, a ring of proteolipid subunits c9c'', rotary subunit d, subunits e and f, and the accessory subunits vah-19/Ac45 and vah-20/PRR.

It localises to the membrane. Functionally, proton-conducting pore forming subunit of the V0 complex of vacuolar(H+)-ATPase (V-ATPase), a multisubunit enzyme composed of a peripheral complex (V1) that hydrolyzes ATP and a membrane integral complex (V0) that translocates protons. V-ATPase is responsible for acidifying and maintaining the pH of intracellular compartments and in some cell types, is targeted to the plasma membrane, where it is responsible for acidifying the extracellular environment. This chain is V-type proton ATPase 16 kDa proteolipid subunit c (12), found in Ascaris suum (Pig roundworm).